We begin with the raw amino-acid sequence, 251 residues long: Triosephosphate isomerase (251 aa).

The substrate site is built by N10 and K12. The active-site Electrophile is the H96. E168 functions as the Proton acceptor in the catalytic mechanism.

This sequence belongs to the triosephosphate isomerase family. Homodimer.

The catalysed reaction is D-glyceraldehyde 3-phosphate = dihydroxyacetone phosphate. It functions in the pathway carbohydrate biosynthesis; gluconeogenesis. The protein operates within carbohydrate degradation; glycolysis; D-glyceraldehyde 3-phosphate from glycerone phosphate: step 1/1. This Aspergillus oryzae (strain ATCC 42149 / RIB 40) (Yellow koji mold) protein is Triosephosphate isomerase (tpiA).